Reading from the N-terminus, the 417-residue chain is MINLKLIETNFDEFNKKLIAKNVKNDVLSTLLEAYDELKKDRLELENLQNLQNTKSKEFGEIMRQKGDAGELKKELSINKSKIQTQSEIVKAAEIKLDKIASCVPNIIDDDVPFGADENENVCIKKILQPPVFDFQPKEHFELGEKLGWLDFERGVKLSGSRFTAIKGMGAKLNLAIINYMIDFNQSRGFELVNLPFLVKDEILFGTGQLPKFKDDLYKVDNDELSLYLIPTSEVTATNFYNGEILSEDELPVKFTSYSHCFRKEAGSAGKDTRGMIRQHQFEKVELVSITKPEDSDKMFDEMVSCASDLLKSLGLAHRQMMLCSGDLGFSAAKTIDLEVWLPGQNTYREISSISNCRDFQARRAKIRYKDKNGKNRLVNTLNGSSLAVGRTLVAIMENYQQKDGSIKIPKVLEEYL.

L-serine is bound at residue 232–234 (TSE). Residue 263–265 (RKE) participates in ATP binding. Residue glutamate 286 coordinates L-serine. ATP is bound at residue 350 to 353 (EISS). Serine 385 contacts L-serine.

Belongs to the class-II aminoacyl-tRNA synthetase family. Type-1 seryl-tRNA synthetase subfamily. As to quaternary structure, homodimer. The tRNA molecule binds across the dimer.

It localises to the cytoplasm. The enzyme catalyses tRNA(Ser) + L-serine + ATP = L-seryl-tRNA(Ser) + AMP + diphosphate + H(+). It catalyses the reaction tRNA(Sec) + L-serine + ATP = L-seryl-tRNA(Sec) + AMP + diphosphate + H(+). Its pathway is aminoacyl-tRNA biosynthesis; selenocysteinyl-tRNA(Sec) biosynthesis; L-seryl-tRNA(Sec) from L-serine and tRNA(Sec): step 1/1. Its function is as follows. Catalyzes the attachment of serine to tRNA(Ser). Is also able to aminoacylate tRNA(Sec) with serine, to form the misacylated tRNA L-seryl-tRNA(Sec), which will be further converted into selenocysteinyl-tRNA(Sec). In Campylobacter hominis (strain ATCC BAA-381 / DSM 21671 / CCUG 45161 / LMG 19568 / NCTC 13146 / CH001A), this protein is Serine--tRNA ligase.